A 952-amino-acid polypeptide reads, in one-letter code: UvrABC system protein A (952 aa).

38 to 45 (GLSGSGKS) contributes to the ATP binding site. A C4-type zinc finger spans residues 258–285 (CNECGFSIPELEPRFFSFNSPVGACKSC). 2 ABC transporter domains span residues 315–596 (FRSV…KKSI) and 616–945 (GNGK…LFLE). 648–655 (GVSGSGKS) is a binding site for ATP. The C4-type zinc-finger motif lies at 747-773 (CENCSGDGLIKIEMHFLPDVFVKCESC).

This sequence belongs to the ABC transporter superfamily. UvrA family. As to quaternary structure, forms a heterotetramer with UvrB during the search for lesions.

It localises to the cytoplasm. In terms of biological role, the UvrABC repair system catalyzes the recognition and processing of DNA lesions. UvrA is an ATPase and a DNA-binding protein. A damage recognition complex composed of 2 UvrA and 2 UvrB subunits scans DNA for abnormalities. When the presence of a lesion has been verified by UvrB, the UvrA molecules dissociate. The protein is UvrABC system protein A of Malacoplasma penetrans (strain HF-2) (Mycoplasma penetrans).